A 384-amino-acid chain; its full sequence is MKITGLFKEFFESEKSSGLFLISCTLFSLVIANSAIANSYLHFWHANLAGNSLEYWINDGLMTIFFLLIGLELEREVYDGELSNIKDAMLPIFGAIGGMIVPAGLFLVMNFGTKTQSGAGIPMATDIAFALAILSLLGNKIPLSLKIFLTALAVIDDLGAILIIAVFYTKTLLWTNLCIALGIFGFLLILNRLKIRNLIPYLIGGVFMWYFMLHSGVHATITGVLLAFAIPFGNGDSRSTSYILQHFLHKPVAFFILPLFALANTAIVLSSNISETLIQNYSIGIALGLIIGKPLGIFLLSMLAVSLGICKLPDDLNWKSILAVGFLGGIGFTMSIFITLLAFNDDTIINNAKFVILISSLIAGIIGYFSLKYVLKNTIIENKN.

11 consecutive transmembrane segments (helical) span residues 17–37 (SGLFLISCTLFSLVIANSAIA), 53–73 (LEYWINDGLMTIFFLLIGLEL), 89–109 (MLPIFGAIGGMIVPAGLFLVM), 118–138 (GAGIPMATDIAFALAILSLLG), 147–167 (IFLTALAVIDDLGAILIIAVF), 171–191 (TLLWTNLCIALGIFGFLLILN), 198–218 (LIPYLIGGVFMWYFMLHSGVH), 251–271 (PVAFFILPLFALANTAIVLSS), 283–303 (IGIALGLIIGKPLGIFLLSML), 321–341 (ILAVGFLGGIGFTMSIFITLL), and 354–374 (FVILISSLIAGIIGYFSLKYV).

Belongs to the NhaA Na(+)/H(+) (TC 2.A.33) antiporter family.

It localises to the cell inner membrane. It catalyses the reaction Na(+)(in) + 2 H(+)(out) = Na(+)(out) + 2 H(+)(in). In terms of biological role, na(+)/H(+) antiporter that extrudes sodium in exchange for external protons. This Flavobacterium psychrophilum (strain ATCC 49511 / DSM 21280 / CIP 103535 / JIP02/86) protein is Na(+)/H(+) antiporter NhaA.